Reading from the N-terminus, the 522-residue chain is Transactivator/viroplasmin protein (522 aa).

Basic and acidic residues predominate over residues 487 to 500; that stretch reads KDASTDRGTTDKDG. The disordered stretch occupies residues 487-522; the sequence is KDASTDRGTTDKDGPPPTRSIVEKEDVPTTSSKQVD.

The protein belongs to the caulimoviridae viroplasmin family.

Its subcellular location is the host cytoplasm. Its function is as follows. Enhances the ribosomal termination-reinitiation event leading to the translation of major open reading frames on the polycistronic viral RNAs. The protein is Transactivator/viroplasmin protein of Arabidopsis thaliana (Mouse-ear cress).